We begin with the raw amino-acid sequence, 239 residues long: RNA polymerase sigma-E factor (239 aa).

A propeptide spans 1–29 (removed by SpoIIGA); it reads MKKLKLRLTHLWYKLLMKLGLKSDEVYYI. The short motif at 86 to 99 is the Polymerase core binding element; it reads DLISIGTIGLIKAV. Residues 206–225 constitute a DNA-binding region (H-T-H motif); that stretch reads QKDVADMMGISQSYISRLEK.

This sequence belongs to the sigma-70 factor family. Post-translationally, proteolytically cleaved in the N-terminus by SpoIIGA to yield the active peptide.

Sigma factors are initiation factors that promote the attachment of RNA polymerase to specific initiation sites and are then released. This sigma factor is responsible for the expression of sporulation specific genes. This is RNA polymerase sigma-E factor (sigE) from Bacillus subtilis (strain 168).